Here is a 463-residue protein sequence, read N- to C-terminus: Dopaminechrome tautomerase (463 aa).

This sequence belongs to the major royal jelly protein family.

It is found in the secreted. It carries out the reaction dopaminechrome = 5,6-dihydroxyindole. It participates in pigment biosynthesis; melanin biosynthesis. Catalyzes the conversion of dopaminechrome to 5,6-dihydroxyindole in the eumelanin biosynthetic pathway originating from dopamine. Catalyzes tautomerization of dopaminechrome to 5,6-dihydroxyindole during eumelanin biosynthesis. Acts both dopaminechrome and N-methyl dopaminechrome but not on dopachrome or other aminochromes tested. In Drosophila melanogaster (Fruit fly), this protein is Dopaminechrome tautomerase.